Reading from the N-terminus, the 555-residue chain is Glucosylglycerate phosphorylase (555 aa).

The active-site Nucleophile is the Asp-231.

This sequence belongs to the glycosyl hydrolase 13 family. Glucosylglycerate phosphorylase subfamily.

It carries out the reaction (2R)-2-O-(alpha-D-glucopyranosyl)-glycerate + phosphate = (R)-glycerate + alpha-D-glucose 1-phosphate. In terms of biological role, catalyzes the reversible phosphorolysis of glucosylglycerate into alpha-D-glucose 1-phosphate (Glc1P) and D-glycerate. May be a regulator of intracellular levels of glucosylglycerate, a compatible solute that primarily protects organisms facing salt stress and very specific nutritional constraints. Has a very strict substrate specificity. Cannot catalyze the phosphorolysis of sucrose or synthesize sucrose from Glc1P and D-fructose. In Allomeiothermus silvanus (strain ATCC 700542 / DSM 9946 / NBRC 106475 / NCIMB 13440 / VI-R2) (Thermus silvanus), this protein is Glucosylglycerate phosphorylase.